The following is a 1203-amino-acid chain: Metabotropic glutamate receptor 5 (1203 aa).

An N-terminal signal peptide occupies residues 1–20; the sequence is MVLLLILSVLLLKEDVRGSA. Residues 21–579 lie on the Extracellular side of the membrane; the sequence is QSSERRVVAH…QYLRWGDPEP (559 aa). An intrachain disulfide couples C57 to C99. Y64 is an L-glutamate binding site. N-linked (GlcNAc...) asparagine glycosylation is present at N88. L-glutamate is bound by residues S151 and 172 to 174; that span reads SAT. N209 is a glycosylation site (N-linked (GlcNAc...) asparagine). Y222 contacts L-glutamate. Cystine bridges form between C240-C529, C275-C277, C364-C380, C418-C425, C510-C530, C514-C533, C536-C548, and C551-C564. D304 provides a ligand contact to L-glutamate. 2 N-linked (GlcNAc...) asparagine glycosylation sites follow: N377 and N381. K395 provides a ligand contact to L-glutamate. N444 carries N-linked (GlcNAc...) asparagine glycosylation. The helical transmembrane segment at 580–602 threads the bilayer; sequence IAAVVFACLGLLATLFVTVIFII. The Cytoplasmic segment spans residues 603–612; that stretch reads YRDTPVVKSS. The chain crosses the membrane as a helical span at residues 613–635; sequence SRELCYIILAGICLGYLCTFCLI. Topologically, residues 636–643 are extracellular; that stretch reads AKPKQIYC. C643 and C732 are oxidised to a cystine. Residues 644 to 666 form a helical membrane-spanning segment; the sequence is YLQRIGIGLSPAMSYSALVTKTN. Residues 667–692 are Cytoplasmic-facing; sequence RIARILAGSKKKICTKKPRFMSACAQ. The helical transmembrane segment at 693–713 threads the bilayer; that stretch reads LVIAFILICIQLGIIVALFIM. The Extracellular portion of the chain corresponds to 714–736; it reads EPPDIMHDYPSIREVYLICNTTN. N733 is a glycosylation site (N-linked (GlcNAc...) asparagine). Residues 737 to 758 form a helical membrane-spanning segment; that stretch reads LGVVTPLGYNGLLILSCTFYAF. The Cytoplasmic portion of the chain corresponds to 759–771; that stretch reads KTRNVPANFNEAK. The chain crosses the membrane as a helical span at residues 772–794; it reads YIAFTMYTTCIIWLAFVPIYFGS. Over 795–797 the chain is Extracellular; the sequence is NYK. Residues 798 to 819 traverse the membrane as a helical segment; sequence IITMCFSVSLSATVALGCMFVP. The Cytoplasmic portion of the chain corresponds to 820–1203; sequence KVYIILAKPE…RDYTQSSSSL (384 aa). At S860 the chain carries Phosphoserine. R868 carries the post-translational modification Omega-N-methylarginine. Disordered stretches follow at residues 892–970, 1003–1054, and 1122–1182; these read FTPK…GSGP, EESF…GSLM, and GAQG…ALCI. Positions 905-920 are enriched in polar residues; it reads TMSSSNGKSVTWAQNE. An Omega-N-methylarginine modification is found at R924. A compositionally biased stretch (low complexity) spans 1007 to 1017; that stretch reads PAAARPRSPSP. 2 positions are modified to phosphoserine: S1014 and S1016. 2 stretches are compositionally biased toward polar residues: residues 1039–1054 and 1165–1176; these read HSET…GSLM and DSGSTTPNSPVS.

The protein belongs to the G-protein coupled receptor 3 family. In terms of assembly, interacts with RYR1, RYR2, ITPR1, SHANK1 and SHANK3. The PPXXF motif binds HOMER1, HOMER2 and HOMER3. Interacts with SIAH1 and TAMALIN. Interacts with NCDN. Interacts with NECAB2. Interacts with CAMK2A. Widely distributed in neuronal cells of the central nervous system.

The protein resides in the cell membrane. G-protein coupled receptor for glutamate. Ligand binding causes a conformation change that triggers signaling via guanine nucleotide-binding proteins (G proteins) and modulates the activity of down-stream effectors. Signaling activates a phosphatidylinositol-calcium second messenger system and generates a calcium-activated chloride current. Plays an important role in the regulation of synaptic plasticity and the modulation of the neural network activity. This chain is Metabotropic glutamate receptor 5 (Grm5), found in Rattus norvegicus (Rat).